Reading from the N-terminus, the 390-residue chain is Galactokinase (390 aa).

34–37 (EHTD) is a binding site for substrate. Residues Ser-68 and 122–128 (GSGLSSS) each bind ATP. Positions 128 and 160 each coordinate Mg(2+). Asp-172 (proton acceptor) is an active-site residue. A substrate-binding site is contributed by Tyr-221.

The protein belongs to the GHMP kinase family. GalK subfamily.

It is found in the cytoplasm. It carries out the reaction alpha-D-galactose + ATP = alpha-D-galactose 1-phosphate + ADP + H(+). It participates in carbohydrate metabolism; galactose metabolism. In terms of biological role, catalyzes the transfer of the gamma-phosphate of ATP to D-galactose to form alpha-D-galactose-1-phosphate (Gal-1-P). The sequence is that of Galactokinase from Chloroflexus aurantiacus (strain ATCC 29366 / DSM 635 / J-10-fl).